Consider the following 294-residue polypeptide: Elongation factor Ts (294 aa).

Positions 81–84 are involved in Mg(2+) ion dislocation from EF-Tu; the sequence is TDFV.

Belongs to the EF-Ts family.

The protein resides in the cytoplasm. In terms of biological role, associates with the EF-Tu.GDP complex and induces the exchange of GDP to GTP. It remains bound to the aminoacyl-tRNA.EF-Tu.GTP complex up to the GTP hydrolysis stage on the ribosome. This Hydrogenovibrio crunogenus (strain DSM 25203 / XCL-2) (Thiomicrospira crunogena) protein is Elongation factor Ts.